Reading from the N-terminus, the 504-residue chain is MKLLEQIEKWATETPDQTAFVWRDAKITYKQLKDDSDALAHWISSEYPDDSSPIMVYGHMQPDMIISFLGCVKAGHAYIPVDLSIPADRVLRIAESSGAKLLLSAAELTVTDLPVRTVSQNNLKDIFFTHKGKIPNPEHAVKDDENFYIIYTSGSTGNPKGVQITHNCLVSFTKWAIQDFNLQTGQVFLNQAPFSFDLSVMDIYPSLVTGGTLWAIDKDMIARPKDLFASLKQSNIQVWTSTPSFAEMCLMETSFSESMLPNMKTFLFCGEVLPNEVAKKLMERFPKATIMNTYGPTEATVAVTSIPVTQEVIDTYQSLPVGYCKSDCRLLIMKEDGTIASDGEKGEIVIVGPSVSVGYLGSPELTEKSFTMIDGERAYKTGDAGYMENGLLFYNGRLDFQIKLHGYRMELEEIEHHLRACSYVEGAVIVPIKKGEKYDYLLAVVVPGEHSFEKEFKLTSAIKKELNERLPNYMIPRKFMYQSSIPMTPNGKVDRKKLLSEVTA.

152-153 contacts ATP; the sequence is TS. Aspartate 197 provides a ligand contact to D-alanine. 292-297 contributes to the ATP binding site; it reads NTYGPT. Residue valine 301 participates in D-alanine binding. Residues aspartate 383, 394-397, and lysine 492 each bind ATP; that span reads YNGR. Lysine 492 provides a ligand contact to D-alanine.

Belongs to the ATP-dependent AMP-binding enzyme family. DltA subfamily.

Its subcellular location is the cytoplasm. It carries out the reaction holo-[D-alanyl-carrier protein] + D-alanine + ATP = D-alanyl-[D-alanyl-carrier protein] + AMP + diphosphate. The protein operates within cell wall biogenesis; lipoteichoic acid biosynthesis. Its function is as follows. Catalyzes the first step in the D-alanylation of lipoteichoic acid (LTA), the activation of D-alanine and its transfer onto the D-alanyl carrier protein (Dcp) DltC. In an ATP-dependent two-step reaction, forms a high energy D-alanyl-AMP intermediate, followed by transfer of the D-alanyl residue as a thiol ester to the phosphopantheinyl prosthetic group of the Dcp. D-alanylation of LTA plays an important role in modulating the properties of the cell wall in Gram-positive bacteria, influencing the net charge of the cell wall. The protein is D-alanine--D-alanyl carrier protein ligase of Bacillus cytotoxicus (strain DSM 22905 / CIP 110041 / 391-98 / NVH 391-98).